The primary structure comprises 1638 residues: DNA polymerase III PolC-type (1638 aa).

Residues 193 to 212 are disordered; that stretch reads SEIKKQRSEERESKNTREAK. A compositionally biased stretch (basic and acidic residues) spans 194-212; the sequence is EIKKQRSEERESKNTREAK. The 157-residue stretch at 596–752 folds into the Exonuclease domain; it reads YVVFDVETTG…FDAEATGRLL (157 aa).

It belongs to the DNA polymerase type-C family. PolC subfamily.

The protein resides in the cytoplasm. The catalysed reaction is DNA(n) + a 2'-deoxyribonucleoside 5'-triphosphate = DNA(n+1) + diphosphate. Required for replicative DNA synthesis. This DNA polymerase also exhibits 3' to 5' exonuclease activity. The polypeptide is DNA polymerase III PolC-type (Lactococcus lactis subsp. lactis (strain IL1403) (Streptococcus lactis)).